A 468-amino-acid chain; its full sequence is MISMLSENEAKILFFLKDLKKTNSVELAIKMGIPESSVLSLIELLREKGYVKTEVKSEKHYVLTEEGRKRKESGLPEDILINTLNGQEKDLNEIKNILNKDFNIAISWAKRKGLIDIKEGKVIPKVKTYMSSEYLALSNLERADSNTINLLKKRGLIEEKERKIVSVELIKEPKESEIGISNLNRELIISGEWKKYKLKKYNVEAFPPYYTISKKHYFREFLEKVKDIMISLGFKEINTGYIEMEFYNFDLLFQPQDHPAREIHDSFSVEGSGKIEDKDLLNNVKEIHEKFWKYEWKQDITLRLMLRSQTTATTARVLASRPKAPQKVFTLGKVFRPDAIDATHLIEFHQLDGVIIDNNFTFKELLGVLKEIFYRLGIKEVKFKPAYFPFTEPSVEAYGYLEKLGWVEMCGAGLLRPEILSSVGIDSTAGAWGIGIERLAMSFLNISDIRLLYSNNIEYIRDTKVKIE.

L-phenylalanine is bound by residues T311, 350–352 (QLD), and F390. Position 392 (E392) interacts with Mg(2+).

The protein belongs to the class-II aminoacyl-tRNA synthetase family. Phe-tRNA synthetase alpha subunit type 2 subfamily. In terms of assembly, tetramer of two alpha and two beta subunits. It depends on Mg(2+) as a cofactor.

It is found in the cytoplasm. It catalyses the reaction tRNA(Phe) + L-phenylalanine + ATP = L-phenylalanyl-tRNA(Phe) + AMP + diphosphate + H(+). This chain is Phenylalanine--tRNA ligase alpha subunit, found in Saccharolobus solfataricus (strain ATCC 35092 / DSM 1617 / JCM 11322 / P2) (Sulfolobus solfataricus).